Here is a 651-residue protein sequence, read N- to C-terminus: MAPSSLFLSVGSLIASSLVSATALEARQSQTYQLAESWQGESFINDWNFFDRADPTNGYVTYVNQSFAEQSGLVKVTQSGSFYMGVDYESTLNPNGPGRESVRIETKNYYTEGLYVIDIEHMPGSICGTWPAFWSVGKDWPNDGEIDIIEGVNLQKANKIVLHTSGSCDVSGSNDMTGTLSSSECGEASGTVGCVVKGTNGSSGDPFNEAGGGVYAMEWTDTFIKIWFFPRSQIPASLSSGNPDTSSFGTPMAHLQGSCDFAERFKAQKFIIDTTFCGDWAGNVFAESTCPMSDPSSPMQSCVNYVAQNPAAFKEAYWEINSIKVYQYGVSAASSAAVSQATASKVEGTLVSVQAANTATPTVPVPAETTAVPQPAQTNTVATSAADYATQSSAETTTVPAATGAPSVSAAEGGDSELESTSTVYVTSTTTICPVAESSSAAAAGGKKDAPFNGVSGAEVAATSVAAAPAAATSEHPGADAIANSAAATSTVAKSEGVASQLTAGALSEIPTAPPEPVSQAVSTGSFDDSDTAQGDSEEHGSIASASAAPSTIPVPASSSAAALGGSSIASSFASSRLVPRPTGSSTAASVTAIATWSPTAGERASGTAKGSATLTAPSEVVFTPGLSNGANRMSVGLSGLIGVMFIAALA.

The N-terminal stretch at 1-21 (MAPSSLFLSVGSLIASSLVSA) is a signal peptide. Positions 36–289 (ESWQGESFIN…WAGNVFAEST (254 aa)) constitute a GH16 domain. N64 is a glycosylation site (N-linked (GlcNAc...) asparagine). The active-site Nucleophile is the E145. E150 serves as the catalytic Proton donor. An N-linked (GlcNAc...) asparagine glycan is attached at N200. Over residues 364–378 (PVPAETTAVPQPAQT) the composition is skewed to low complexity. Disordered regions lie at residues 364–422 (PVPA…ESTS) and 508–557 (SEIP…PVPA). Composition is skewed to polar residues over residues 379–400 (NTVATSAADYATQSSAETTTVP) and 520–535 (QAVSTGSFDDSDTAQG). A compositionally biased stretch (low complexity) spans 542-557 (SIASASAAPSTIPVPA). N629 is lipidated: GPI-anchor amidated asparagine. Positions 630–651 (GANRMSVGLSGLIGVMFIAALA) are cleaved as a propeptide — removed in mature form.

This sequence belongs to the glycosyl hydrolase 16 family.

The protein localises to the cell membrane. The catalysed reaction is Endohydrolysis of (1-&gt;3)- or (1-&gt;4)-linkages in beta-D-glucans when the glucose residue whose reducing group is involved in the linkage to be hydrolyzed is itself substituted at C-3.. Mixed-linked glucanase involved in the degradation of complex natural cellulosic substrates. The polypeptide is Probable endo-1,3(4)-beta-glucanase NFIA_089530 (Neosartorya fischeri (strain ATCC 1020 / DSM 3700 / CBS 544.65 / FGSC A1164 / JCM 1740 / NRRL 181 / WB 181) (Aspergillus fischerianus)).